Consider the following 782-residue polypeptide: Endonuclease MutS2 (782 aa).

336 to 343 (GPNTGGKT) contributes to the ATP binding site. Positions 707-782 (LDLRGYRYEE…GFGVTVAELK (76 aa)) constitute a Smr domain.

Belongs to the DNA mismatch repair MutS family. MutS2 subfamily. In terms of assembly, homodimer. Binds to stalled ribosomes, contacting rRNA.

Functionally, endonuclease that is involved in the suppression of homologous recombination and thus may have a key role in the control of bacterial genetic diversity. Its function is as follows. Acts as a ribosome collision sensor, splitting the ribosome into its 2 subunits. Detects stalled/collided 70S ribosomes which it binds and splits by an ATP-hydrolysis driven conformational change. Acts upstream of the ribosome quality control system (RQC), a ribosome-associated complex that mediates the extraction of incompletely synthesized nascent chains from stalled ribosomes and their subsequent degradation. Probably generates substrates for RQC. This is Endonuclease MutS2 from Staphylococcus carnosus (strain TM300).